The chain runs to 122 residues: Ribosome-binding factor A (122 aa).

The protein belongs to the RbfA family. In terms of assembly, monomer. Binds 30S ribosomal subunits, but not 50S ribosomal subunits or 70S ribosomes.

The protein resides in the cytoplasm. In terms of biological role, one of several proteins that assist in the late maturation steps of the functional core of the 30S ribosomal subunit. Associates with free 30S ribosomal subunits (but not with 30S subunits that are part of 70S ribosomes or polysomes). Required for efficient processing of 16S rRNA. May interact with the 5'-terminal helix region of 16S rRNA. The sequence is that of Ribosome-binding factor A from Caldanaerobacter subterraneus subsp. tengcongensis (strain DSM 15242 / JCM 11007 / NBRC 100824 / MB4) (Thermoanaerobacter tengcongensis).